Reading from the N-terminus, the 227-residue chain is uncharacterized protein (227 aa).

The protein resides in the virion. This is an uncharacterized protein from Acanthamoeba polyphaga (Amoeba).